Here is a 256-residue protein sequence, read N- to C-terminus: Peroxisomal membrane protein PMP30B (256 aa).

The protein belongs to the peroxin-11 family.

Its subcellular location is the peroxisome membrane. Its function is as follows. Involved in peroxisomal proliferation. Could participate in peroxisomal elongation or fission. May be involved in parceling of peroxisomes into regular quanta. This chain is Peroxisomal membrane protein PMP30B (PEX11B), found in Candida boidinii (Yeast).